The primary structure comprises 257 residues: Transcriptional regulatory protein TrcR (257 aa).

Positions arginine 33–leucine 147 constitute a Response regulatory domain. Position 82 is a 4-aspartylphosphate (aspartate 82). The segment at residues aspartate 158 to proline 255 is a DNA-binding region (ompR/PhoB-type).

In terms of processing, phosphorylated by TrcS.

Functionally, member of the two-component regulatory system TrcS/TrcR. Activates its own expression by binding specifically to the AT-rich sequence of the trcR promoter region. Also negatively regulates the expression of Rv1057 by binding to an AT-rich sequences within the Rv1057 upstream sequence. The TrcR-TrcS regulatory system may act as a transition regulatory system involved in adapting to an intracellular environment and transitioning from latency to reactivation. The sequence is that of Transcriptional regulatory protein TrcR from Mycobacterium tuberculosis (strain ATCC 25618 / H37Rv).